A 910-amino-acid chain; its full sequence is Leucine--tRNA ligase (910 aa).

Positions 50 to 60 (PYTNGSLHVGH) match the 'HIGH' region motif. A 'KMSKS' region motif is present at residues 611 to 615 (KISKS). Lys-614 is an ATP binding site.

This sequence belongs to the class-I aminoacyl-tRNA synthetase family.

The protein localises to the cytoplasm. The enzyme catalyses tRNA(Leu) + L-leucine + ATP = L-leucyl-tRNA(Leu) + AMP + diphosphate. This Thermoplasma acidophilum (strain ATCC 25905 / DSM 1728 / JCM 9062 / NBRC 15155 / AMRC-C165) protein is Leucine--tRNA ligase.